A 921-amino-acid chain; its full sequence is Protein translocase subunit SecA (921 aa).

ATP is bound by residues Q87, 105-109 (GEGKT), and D516. Residues C905, C907, C916, and H917 each contribute to the Zn(2+) site.

The protein belongs to the SecA family. In terms of assembly, monomer and homodimer. Part of the essential Sec protein translocation apparatus which comprises SecA, SecYEG and auxiliary proteins SecDF-YajC and YidC. It depends on Zn(2+) as a cofactor.

It is found in the cell inner membrane. It localises to the cytoplasm. The catalysed reaction is ATP + H2O + cellular proteinSide 1 = ADP + phosphate + cellular proteinSide 2.. In terms of biological role, part of the Sec protein translocase complex. Interacts with the SecYEG preprotein conducting channel. Has a central role in coupling the hydrolysis of ATP to the transfer of proteins into and across the cell membrane, serving both as a receptor for the preprotein-SecB complex and as an ATP-driven molecular motor driving the stepwise translocation of polypeptide chains across the membrane. The polypeptide is Protein translocase subunit SecA (Polaromonas sp. (strain JS666 / ATCC BAA-500)).